The following is a 340-amino-acid chain: Adenosine kinase (340 aa).

Asp293 is an active-site residue.

This sequence belongs to the carbohydrate kinase PfkB family. In terms of assembly, monomer. The cofactor is Mg(2+).

The catalysed reaction is adenosine + ATP = AMP + ADP + H(+). It participates in purine metabolism; AMP biosynthesis via salvage pathway; AMP from adenosine: step 1/1. ATP dependent phosphorylation of adenosine and other related nucleoside analogs to monophosphate derivatives. The sequence is that of Adenosine kinase (adk) from Dictyostelium discoideum (Social amoeba).